The primary structure comprises 252 residues: 3-deoxy-manno-octulosonate cytidylyltransferase (252 aa).

The protein belongs to the KdsB family.

Its subcellular location is the cytoplasm. The enzyme catalyses 3-deoxy-alpha-D-manno-oct-2-ulosonate + CTP = CMP-3-deoxy-beta-D-manno-octulosonate + diphosphate. Its pathway is nucleotide-sugar biosynthesis; CMP-3-deoxy-D-manno-octulosonate biosynthesis; CMP-3-deoxy-D-manno-octulosonate from 3-deoxy-D-manno-octulosonate and CTP: step 1/1. It participates in bacterial outer membrane biogenesis; lipopolysaccharide biosynthesis. In terms of biological role, activates KDO (a required 8-carbon sugar) for incorporation into bacterial lipopolysaccharide in Gram-negative bacteria. The polypeptide is 3-deoxy-manno-octulosonate cytidylyltransferase (Nitratidesulfovibrio vulgaris (strain ATCC 29579 / DSM 644 / CCUG 34227 / NCIMB 8303 / VKM B-1760 / Hildenborough) (Desulfovibrio vulgaris)).